A 152-amino-acid polypeptide reads, in one-letter code: Small ribosomal subunit protein uS13 (152 aa).

The residue at position 2 (serine 2) is an N-acetylserine. Lysine 91 is covalently cross-linked (Glycyl lysine isopeptide (Lys-Gly) (interchain with G-Cter in SUMO2)). Lysine 94 and lysine 106 each carry N6-acetyllysine; alternate. Residues lysine 94 and lysine 106 each participate in a glycyl lysine isopeptide (Lys-Gly) (interchain with G-Cter in SUMO2); alternate cross-link.

The protein belongs to the universal ribosomal protein uS13 family. In terms of assembly, component of the small ribosomal subunit.

The protein resides in the cytoplasm. Component of the small ribosomal subunit. The ribosome is a large ribonucleoprotein complex responsible for the synthesis of proteins in the cell. In Homo sapiens (Human), this protein is Small ribosomal subunit protein uS13 (RPS18).